A 309-amino-acid polypeptide reads, in one-letter code: Taste receptor type 2 member 64 (309 aa).

Over M1 to Y3 the chain is Extracellular. Residues F4 to F26 form a helical membrane-spanning segment. At V27–Q46 the chain is on the cytoplasmic side. Residues I47–N69 form a helical membrane-spanning segment. At V70 to V83 the chain is on the extracellular side. A helical transmembrane segment spans residues A84 to Y106. Residues L107–R126 lie on the Cytoplasmic side of the membrane. A helical membrane pass occupies residues S127–M149. At D150–D176 the chain is on the extracellular side. Residue N161 is glycosylated (N-linked (GlcNAc...) asparagine). Residues L177–I199 form a helical membrane-spanning segment. At C200–T230 the chain is on the cytoplasmic side. Residues V231–W253 form a helical membrane-spanning segment. Topologically, residues T254 to K258 are extracellular. Residues L259–M281 form a helical membrane-spanning segment. Over G282–P309 the chain is Cytoplasmic.

The protein belongs to the G-protein coupled receptor T2R family.

Its subcellular location is the membrane. Receptor that may play a role in the perception of bitterness and is gustducin-linked. May play a role in sensing the chemical composition of the gastrointestinal content. The activity of this receptor may stimulate alpha gustducin, mediate PLC-beta-2 activation and lead to the gating of TRPM5. The chain is Taste receptor type 2 member 64 (TAS2R64) from Pan paniscus (Pygmy chimpanzee).